Consider the following 235-residue polypeptide: Probable transcriptional regulatory protein JJD26997_0557 (235 aa).

The protein belongs to the TACO1 family.

The protein resides in the cytoplasm. The chain is Probable transcriptional regulatory protein JJD26997_0557 from Campylobacter jejuni subsp. doylei (strain ATCC BAA-1458 / RM4099 / 269.97).